The following is a 249-amino-acid chain: Triosephosphate isomerase (249 aa).

Position 9-11 (9-11 (NWK)) interacts with substrate. Histidine 94 acts as the Electrophile in catalysis. Glutamate 166 acts as the Proton acceptor in catalysis. Substrate is bound by residues glycine 172, serine 212, and 233 to 234 (GG).

Belongs to the triosephosphate isomerase family. As to quaternary structure, homodimer.

It localises to the cytoplasm. It carries out the reaction D-glyceraldehyde 3-phosphate = dihydroxyacetone phosphate. It participates in carbohydrate biosynthesis; gluconeogenesis. It functions in the pathway carbohydrate degradation; glycolysis; D-glyceraldehyde 3-phosphate from glycerone phosphate: step 1/1. Functionally, involved in the gluconeogenesis. Catalyzes stereospecifically the conversion of dihydroxyacetone phosphate (DHAP) to D-glyceraldehyde-3-phosphate (G3P). The polypeptide is Triosephosphate isomerase (Treponema pallidum (strain Nichols)).